A 184-amino-acid chain; its full sequence is NADH-quinone oxidoreductase subunit B (184 aa).

The [4Fe-4S] cluster site is built by Cys-63, Cys-64, Cys-128, and Cys-158.

This sequence belongs to the complex I 20 kDa subunit family. In terms of assembly, NDH-1 is composed of 14 different subunits. Subunits NuoB, C, D, E, F, and G constitute the peripheral sector of the complex. [4Fe-4S] cluster is required as a cofactor.

Its subcellular location is the cell inner membrane. The catalysed reaction is a quinone + NADH + 5 H(+)(in) = a quinol + NAD(+) + 4 H(+)(out). In terms of biological role, NDH-1 shuttles electrons from NADH, via FMN and iron-sulfur (Fe-S) centers, to quinones in the respiratory chain. The immediate electron acceptor for the enzyme in this species is believed to be ubiquinone. Couples the redox reaction to proton translocation (for every two electrons transferred, four hydrogen ions are translocated across the cytoplasmic membrane), and thus conserves the redox energy in a proton gradient. The chain is NADH-quinone oxidoreductase subunit B from Xanthomonas oryzae pv. oryzae (strain MAFF 311018).